The sequence spans 507 residues: Cytochrome P450 monooxygenase ptmU (507 aa).

Residues 4–24 form a helical membrane-spanning segment; sequence VNAWWVGGSLLLGIWAIVVFF. Residues Asn-98, Asn-202, and Asn-398 are each glycosylated (N-linked (GlcNAc...) asparagine). Position 444 (Cys-444) interacts with heme.

The protein belongs to the cytochrome P450 family. Heme serves as cofactor.

It is found in the membrane. It functions in the pathway secondary metabolite biosynthesis. Its function is as follows. Cytochrome P450 monooxygenase; part of the gene cluster that mediates the biosynthesis of the indole diterpenes penitrems. The geranylgeranyl diphosphate (GGPP) synthase ptmG catalyzes the first step in penitrem biosynthesis via conversion of farnesyl pyrophosphate and isopentyl pyrophosphate into geranylgeranyl pyrophosphate (GGPP). Condensation of indole-3-glycerol phosphate with GGPP by the prenyl transferase ptmC then forms 3-geranylgeranylindole (3-GGI). Epoxidation by the FAD-dependent monooxygenase ptmM leads to a epoxidized-GGI that is substrate of the terpene cyclase ptmB for cyclization to yield paspaline. Paspaline is subsequently converted to 13-desoxypaxilline by the cytochrome P450 monooxygenase ptmP, the latter being then converted to paxilline by the cytochrome P450 monooxygenase ptmQ. Paxilline is converted to beta-paxitriol via C-10 ketoreduction by the short-chain dehydrogenase ptmH which can be monoprenylated at the C-20 by the indole diterpene prenyltransferase ptmD. A two-step elimination (acetylation and elimination) process performed by the O-acetyltransferase ptmV and ptmI leads to the production of the prenylated form of penijanthine. The FAD-linked oxidoreductase ptmO then converts the prenylated form of penijanthine into PC-M5 which is in turn transformed into PC-M4 by the aromatic dimethylallyltransferase ptmE. Five sequential oxidative transformations performed by the cytochrome P450 monooxygenases ptmK, ptmU, ptmL, ptmN and ptmJ yield the various penitrem compounds. PtmK, ptmU and ptmM are involved in the formation of the key bicyclic ring of penitrem C via the formation of the intermediates secopenitrem D and penitrem D. PtmL catalyzes the epoxidation of penitrem D and C to yield penitrem B and F, respectively. PtmJ catalyzes the last benzylic hydroxylation to convert penitrem B to prenitrem E and penitrem F to penitrem A. The sequence is that of Cytochrome P450 monooxygenase ptmU from Penicillium ochrochloron.